The primary structure comprises 75 residues: Cytochrome c oxidase subunit 6C (75 aa).

Topologically, residues 1 to 13 (MASEVLAKPQMRG) are mitochondrial matrix. The chain crosses the membrane as a helical span at residues 14-54 (LLARRLRIHMVGAFLISLGVAALYKFGVAEPRKKAYADFYK). Residues 55–75 (NYSPEKDFEEMKKAGVFRSIK) are Mitochondrial intermembrane-facing.

Belongs to the cytochrome c oxidase subunit 6c family. In terms of assembly, component of the cytochrome c oxidase (complex IV, CIV), a multisubunit enzyme composed of 14 subunits. The complex is composed of a catalytic core of 3 subunits MT-CO1, MT-CO2 and MT-CO3, encoded in the mitochondrial DNA, and 11 supernumerary subunits COX4I, COX5A, COX5B, COX6A, COX6B, COX6C, COX7A, COX7B, COX7C, COX8 and NDUFA4, which are encoded in the nuclear genome. The complex exists as a monomer or a dimer and forms supercomplexes (SCs) in the inner mitochondrial membrane with NADH-ubiquinone oxidoreductase (complex I, CI) and ubiquinol-cytochrome c oxidoreductase (cytochrome b-c1 complex, complex III, CIII), resulting in different assemblies (supercomplex SCI(1)III(2)IV(1) and megacomplex MCI(2)III(2)IV(2)).

It is found in the mitochondrion inner membrane. It functions in the pathway energy metabolism; oxidative phosphorylation. Its function is as follows. Component of the cytochrome c oxidase, the last enzyme in the mitochondrial electron transport chain which drives oxidative phosphorylation. The respiratory chain contains 3 multisubunit complexes succinate dehydrogenase (complex II, CII), ubiquinol-cytochrome c oxidoreductase (cytochrome b-c1 complex, complex III, CIII) and cytochrome c oxidase (complex IV, CIV), that cooperate to transfer electrons derived from NADH and succinate to molecular oxygen, creating an electrochemical gradient over the inner membrane that drives transmembrane transport and the ATP synthase. Cytochrome c oxidase is the component of the respiratory chain that catalyzes the reduction of oxygen to water. Electrons originating from reduced cytochrome c in the intermembrane space (IMS) are transferred via the dinuclear copper A center (CU(A)) of subunit 2 and heme A of subunit 1 to the active site in subunit 1, a binuclear center (BNC) formed by heme A3 and copper B (CU(B)). The BNC reduces molecular oxygen to 2 water molecules using 4 electrons from cytochrome c in the IMS and 4 protons from the mitochondrial matrix. The chain is Cytochrome c oxidase subunit 6C (COX6C) from Saimiri sciureus (Common squirrel monkey).